Consider the following 165-residue polypeptide: Endoribonuclease YbeY (165 aa).

Positions 130, 134, and 140 each coordinate Zn(2+).

Belongs to the endoribonuclease YbeY family. It depends on Zn(2+) as a cofactor.

The protein localises to the cytoplasm. Its function is as follows. Single strand-specific metallo-endoribonuclease involved in late-stage 70S ribosome quality control and in maturation of the 3' terminus of the 16S rRNA. In Streptococcus suis (strain 98HAH33), this protein is Endoribonuclease YbeY.